Here is a 304-residue protein sequence, read N- to C-terminus: Cell surface-binding protein OPG105 (304 aa).

Residues 1–235 enclose the Alpha-carbonic anhydrase domain; that stretch reads MPQQLSPINI…NDDTQVYYSG (235 aa). Over 1–275 the chain is Virion surface; it reads MPQQLSPINI…YQKYIEGNKT (275 aa). The helical transmembrane segment at 276-294 threads the bilayer; that stretch reads FAIIAIVFVFILTAILFLM. Over 295-304 the chain is Intravirion; it reads SQRYSREKQN.

The protein belongs to the alpha-carbonic anhydrase family. Homodimer; disulfide-linked. In terms of processing, apparently non-glycosylated.

The protein resides in the virion membrane. In terms of biological role, binds to chondroitin sulfate on the cell surface to provide virion attachment to target cell. The sequence is that of Cell surface-binding protein OPG105 (OPG105) from Monkeypox virus (strain Zaire-96-I-16) (MPX).